Consider the following 161-residue polypeptide: Large ribosomal subunit protein uL10 (161 aa).

Belongs to the universal ribosomal protein uL10 family. As to quaternary structure, part of the ribosomal stalk of the 50S ribosomal subunit. The N-terminus interacts with L11 and the large rRNA to form the base of the stalk. The C-terminus forms an elongated spine to which L12 dimers bind in a sequential fashion forming a multimeric L10(L12)X complex.

Its function is as follows. Forms part of the ribosomal stalk, playing a central role in the interaction of the ribosome with GTP-bound translation factors. The protein is Large ribosomal subunit protein uL10 (rplJ) of Wigglesworthia glossinidia brevipalpis.